The following is a 325-amino-acid chain: MSWLSPEVTEILLTVLKAVVILLVVVTCGAFMSMGERRLLGLFQNRYGPNRVGYAGSAQLIADMIKMFFKEDWIPKFADRFIFTIAPVIAFSSLLLSFAIVPVSSTWVVADLNIGILFFLMVAGLAVYAVLFAGWSSNNKYSLLGAMRASAQTVSYEVFLGLSILGVVAQAGSFNLTDIVNSQAHMWNIIPQFFGFITFAIAGVAVCHRHPFDQPEAEQELADGYHIEYSGMKFGLFFVGEYIGIVAVSGLIVTLFFGGWQGPFLPSFVWFALKTGFFMMMFILIRASLPRPRYDQVMAFGWKICLPLTLINLLVTAAVILYNAQ.

8 consecutive transmembrane segments (helical) span residues 11-31, 81-101, 114-134, 154-174, 186-206, 237-257, 265-285, and 304-324; these read ILLT…CGAF, FIFT…FAIV, IGIL…LFAG, VSYE…AGSF, MWNI…GVAV, FFVG…TLFF, LPSF…FILI, and ICLP…LYNA.

The protein belongs to the complex I subunit 1 family. NDH-1 is composed of 13 different subunits. Subunits NuoA, H, J, K, L, M, N constitute the membrane sector of the complex.

It is found in the cell inner membrane. It carries out the reaction a quinone + NADH + 5 H(+)(in) = a quinol + NAD(+) + 4 H(+)(out). Functionally, NDH-1 shuttles electrons from NADH, via FMN and iron-sulfur (Fe-S) centers, to quinones in the respiratory chain. The immediate electron acceptor for the enzyme in this species is believed to be ubiquinone. Couples the redox reaction to proton translocation (for every two electrons transferred, four hydrogen ions are translocated across the cytoplasmic membrane), and thus conserves the redox energy in a proton gradient. This subunit may bind ubiquinone. The chain is NADH-quinone oxidoreductase subunit H from Proteus mirabilis (strain HI4320).